A 393-amino-acid polypeptide reads, in one-letter code: Formate-dependent phosphoribosylglycinamide formyltransferase (393 aa).

Residues 22 to 23 (EL) and E82 each bind N(1)-(5-phospho-beta-D-ribosyl)glycinamide. ATP contacts are provided by residues R114, K155, 160-165 (SSGKGQ), 195-198 (EGFV), and E203. In terms of domain architecture, ATP-grasp spans 119–308 (RLAAEDLGIP…EFALHLRAIL (190 aa)). Positions 267 and 279 each coordinate Mg(2+). N(1)-(5-phospho-beta-D-ribosyl)glycinamide contacts are provided by residues D286, K356, and 363–364 (RR).

It belongs to the PurK/PurT family. Homodimer.

It carries out the reaction N(1)-(5-phospho-beta-D-ribosyl)glycinamide + formate + ATP = N(2)-formyl-N(1)-(5-phospho-beta-D-ribosyl)glycinamide + ADP + phosphate + H(+). Its pathway is purine metabolism; IMP biosynthesis via de novo pathway; N(2)-formyl-N(1)-(5-phospho-D-ribosyl)glycinamide from N(1)-(5-phospho-D-ribosyl)glycinamide (formate route): step 1/1. Functionally, involved in the de novo purine biosynthesis. Catalyzes the transfer of formate to 5-phospho-ribosyl-glycinamide (GAR), producing 5-phospho-ribosyl-N-formylglycinamide (FGAR). Formate is provided by PurU via hydrolysis of 10-formyl-tetrahydrofolate. The chain is Formate-dependent phosphoribosylglycinamide formyltransferase from Hydrogenovibrio crunogenus (strain DSM 25203 / XCL-2) (Thiomicrospira crunogena).